The sequence spans 88 residues: MTKGTTSFGKRHNKSHTQCRRCGRKSYHIQKKTCSSCGYPSARLRKYNWSEKAKRRRTTGTGRMLHLKRVHRRFKQGFRSGPPKPVKA.

The disordered stretch occupies residues 1–24 (MTKGTTSFGKRHNKSHTQCRRCGR). Residues 9–24 (GKRHNKSHTQCRRCGR) are compositionally biased toward basic residues. Zn(2+)-binding residues include C19, C22, C34, and C37. The C4-type zinc-finger motif lies at 19–37 (CRRCGRKSYHIQKKTCSSC).

The protein belongs to the eukaryotic ribosomal protein eL37 family. The cofactor is Zn(2+).

Functionally, binds to the 23S rRNA. The protein is Large ribosomal subunit protein eL37 (RPL37) of Schistosoma mansoni (Blood fluke).